Reading from the N-terminus, the 106-residue chain is Iron-sulfur cluster assembly protein CyaY (106 aa).

It belongs to the frataxin family.

Functionally, involved in iron-sulfur (Fe-S) cluster assembly. May act as a regulator of Fe-S biogenesis. The protein is Iron-sulfur cluster assembly protein CyaY of Dickeya chrysanthemi (Pectobacterium chrysanthemi).